The primary structure comprises 100 residues: Small ribosomal subunit protein uS14 (100 aa).

The protein belongs to the universal ribosomal protein uS14 family. As to quaternary structure, part of the 30S ribosomal subunit. Contacts proteins S3 and S10.

Functionally, binds 16S rRNA, required for the assembly of 30S particles and may also be responsible for determining the conformation of the 16S rRNA at the A site. The sequence is that of Small ribosomal subunit protein uS14 from Gloeothece citriformis (strain PCC 7424) (Cyanothece sp. (strain PCC 7424)).